Here is a 924-residue protein sequence, read N- to C-terminus: Ubiquitin carboxyl-terminal hydrolase 15 (924 aa).

Zn(2+)-binding residues include cysteine 130, cysteine 133, cysteine 141, cysteine 144, cysteine 150, cysteine 154, histidine 163, and cysteine 167. The MYND-type zinc finger occupies 130–167; sequence CARCFGPAKTRCSRCKSVRYCSGKCQIIHWRVAHKDEC. Positions 226–236 are enriched in polar residues; sequence DITPQINTQGR. Disordered stretches follow at residues 226 to 301 and 317 to 366; these read DITP…VDSS and SHKH…TSKK. Positions 247-256 are enriched in basic and acidic residues; the sequence is ANRESCRRDS. A compositionally biased stretch (polar residues) spans 331-362; sequence GCPNTQYPSNGTRTATLPRTGINKSGEQSCTE. The 307-residue stretch at 438-744 folds into the USP domain; the sequence is RGLVNCGNSC…GAYMLFYMRS (307 aa). The active-site Nucleophile is cysteine 447. Catalysis depends on histidine 703, which acts as the Proton acceptor. The disordered stretch occupies residues 750–793; sequence RGEHNGKAPVHHSQPRNEMKEQRKPVNRFKPRADHKNTESSSSE. Residues 764-773 show a composition bias toward basic and acidic residues; it reads PRNEMKEQRK.

This sequence belongs to the peptidase C19 family. In terms of assembly, interacts with DA1. In terms of tissue distribution, highly expressed in rosette leaves and inflorescence. Expressed at low levels in cotyledons, stems, cauline leaves and siliques.

The protein localises to the cytoplasm. It localises to the nucleus. The catalysed reaction is Thiol-dependent hydrolysis of ester, thioester, amide, peptide and isopeptide bonds formed by the C-terminal Gly of ubiquitin (a 76-residue protein attached to proteins as an intracellular targeting signal).. Functionally, recognizes and hydrolyzes the peptide bond at the C-terminal Gly of ubiquitin. Involved in the processing of poly-ubiquitin precursors as well as that of ubiquitinated proteins. Involved in the regulation of organ size. Acts as a positive regulator of cell proliferation. Possesses deubiquitinating enzyme activity in vitro. The enzyme activity of UBP15 is required for its function in regulation of cell proliferation. Functions antagonistically in a common pathway with DA1 to regulate seed size. Acts maternally to regulate seed size by promoting cell proliferation in the integuments of ovules and developing seeds. Functions independently of DA2 and BB. The chain is Ubiquitin carboxyl-terminal hydrolase 15 from Arabidopsis thaliana (Mouse-ear cress).